A 353-amino-acid chain; its full sequence is MSKTTEVKVVEVQLEDPLPGIVDASRFISGSPTEQRAFAVELVDSVRRCGFVKVINHGLSDELIDELFAWCQSSHVVQNERFFAIDPEQKLAVVNPPGPSPQRGWSCVGAEKASRLFSRGQTSLDLTDARRNQEHFDAGSPSDTKWPSRWPDEAVIPGFKAFLEDFYVRSHQAALLILEALEMGLNLPAGVLKSRCGGCASELRLNNYPEIDIEELRRGKISRIHPHADLGVITCLFQDGLGGLELEHRSHAGSFLPVPPGARSEMVVNISETFQLWTNNVITAGIHQVTVPPEMKTRTEGRISARRSCAFFLKANGDASVAPLPQFVTQERPAAYSEMTALDYHQKRLATAY.

One can recognise a Fe2OG dioxygenase domain in the interval 199–315 (CASELRLNNY…RRSCAFFLKA (117 aa)). Fe cation-binding residues include histidine 227, aspartate 229, and histidine 287. Arginine 302 provides a ligand contact to 2-oxoglutarate.

This sequence belongs to the iron/ascorbate-dependent oxidoreductase family. Requires Fe(2+) as cofactor.

It participates in alkaloid biosynthesis. Its function is as follows. 2-oxoglutarate-dependent dioxygenase; part of the gene cluster that mediates the biosynthesis of paraherquamide, a fungal indole alkaloid that belongs to a family of natural products containing a characteristic bicyclo[2.2.2]diazaoctane core. The first steps in the biosynthesis of paraherquamide is the production of the beta-methyl-proline precursor from L-isoleucine. They require oxidation of a terminally hydroxylated L-isoleucine to the corresponding aldehyde by enzymes which have still to be identified. Spontaneous cyclization and dehydration would yield the 4-methyl pyrolline-5-carboxylic acid, which is then reduced by the pyrroline-5-carboxylate reductase phqD leading to the beta-methyl-proline precursor. The next step of paraherquamide biosynthesis involves coupling of beta-methyl-proline and L-tryptophan by the bimodular NRPS phqB, to produce a monooxopiperazine intermediate. The reductase (R) domain of phqB utilizes NADPH for hydride transfer to reduce the thioester bond of the T domain-tethered linear dipeptide to a hemithioaminal intermediate, which spontaneously cleaves the C-S bond to release the aldehyde product. This compound undergoes spontaneous cyclization and dehydration to give a dienamine which is reverse prenylated at C-2 by the reverse prenyltransferase phqJ. The other prenyltransferase present in the cluster, phqI may be a redundant gene in the pathway. During biosynthetic assembly, the key step to produce the polycyclic core is catalyzed by the bifunctional reductase and intramolecular [4+2] Diels-Alderase, phqE, resulting in formation of the [2.2.2] diazaoctane intermediate preparaherquamide. Following formation of preparaherquamide, an indole 2,3-epoxidation-initiated pinacol-like rearrangement is catalyzed by the phqK FAD-dependent monooxygenase. The prenyltransferase phqA, the cytochrome P450 monooxygenase phqL, and the FAD-linked oxidoreductase phqH (or the cytochrome P450 monooxygenase phqM), are proposed to be involved in the formation of the pyran ring. The FAD-dependent monooxygenase phqK is likely responsible for generation of the spiro-oxindole, and the N-methylation is likely mediated by the phqN methyltransferase leading to the isolable natural product paraherquamide F. However, the order of these biosynthetic steps has still to be determined. In late-stage paraherquamide biosynthesis, the third P450 monooxygenase, phqO, is probably responsible for the C-14 hydroxylation, transforming paraherquamide F to paraherquamide G, and paraherquamide E to the final product paraherquamide A. The expansion from the 6-membered ring pyran (in paraherquamides F and G) to the 7-membered dioxepin ring (in paraherquamides A and E) represents a poorly understood but intriguing process that probably involves the 2-oxoglutarate-dependent dioxygenase phqC. Finally, the remaining members of the paraherquamide cluster, including phqI as well as phqM (or phqH), do not have a clearly prescribed role and appear to be redundant. The sequence is that of 2-oxoglutarate-dependent dioxygenase phqC from Penicillium fellutanum.